The chain runs to 399 residues: Tyrosine--tRNA ligase (399 aa).

A 'HIGH' region motif is present at residues 42–51 (PTAPDLHLGH). The 'KMSKS' region motif lies at 226–230 (KMSKS). Position 229 (K229) interacts with ATP. The 62-residue stretch at 337–398 (IAIANLLKDA…GKRKFARITV (62 aa)) folds into the S4 RNA-binding domain.

This sequence belongs to the class-I aminoacyl-tRNA synthetase family. TyrS type 2 subfamily. Homodimer.

Its subcellular location is the cytoplasm. The catalysed reaction is tRNA(Tyr) + L-tyrosine + ATP = L-tyrosyl-tRNA(Tyr) + AMP + diphosphate + H(+). Catalyzes the attachment of tyrosine to tRNA(Tyr) in a two-step reaction: tyrosine is first activated by ATP to form Tyr-AMP and then transferred to the acceptor end of tRNA(Tyr). This chain is Tyrosine--tRNA ligase, found in Colwellia psychrerythraea (strain 34H / ATCC BAA-681) (Vibrio psychroerythus).